A 934-amino-acid polypeptide reads, in one-letter code: Serine/threonine-protein kinase PknD (934 aa).

In terms of domain architecture, Protein kinase spans 4–296 (YELIRLIGRG…ELRKALQPHL (293 aa)). ATP is bound by residues 10 to 18 (IGRGGMGEV) and lysine 33. Aspartate 138 (proton acceptor) is an active-site residue.

Belongs to the protein kinase superfamily. Ser/Thr protein kinase family. Autophosphorylated on serine and threonine residues.

It carries out the reaction L-seryl-[protein] + ATP = O-phospho-L-seryl-[protein] + ADP + H(+). The enzyme catalyses L-threonyl-[protein] + ATP = O-phospho-L-threonyl-[protein] + ADP + H(+). Together with the serine/threonine kinase Pkn1, may play a role in the specific interactions with host proteins during intracellular growth. The polypeptide is Serine/threonine-protein kinase PknD (Chlamydia muridarum (strain MoPn / Nigg)).